Here is an 87-residue protein sequence, read N- to C-terminus: Selenoprotein W (87 aa).

The cysteinyl-selenocysteine (Cys-Sec); redox-active cross-link spans C10 to U13. U13 is a non-standard amino acid (selenocysteine). At C37 the chain carries S-glutathionyl cysteine.

This sequence belongs to the SelWTH family. Selenoprotein W subfamily. As to quaternary structure, interacts with DPYSL2, PRDX1, YWHAB, YWHAG, HSP70 and HSP90. In terms of tissue distribution, detected in muscle, heart, tongue, brain, lung, spleen, kidney and liver. Highest levels expressed in muscle and heart whereas lowest levels detected in liver (at protein level).

The protein localises to the cytoplasm. In terms of biological role, plays a role as a glutathione (GSH)-dependent antioxidant. May be involved in a redox-related process. May play a role in the myopathies of selenium deficiency. The protein is Selenoprotein W of Ovis aries (Sheep).